We begin with the raw amino-acid sequence, 70 residues long: MLRQHQDSLLLRFAQGEEGHETTTQLSCLVCVDRVSHTVDIHLSDTKIAVRDSLQRRIQGGGGFHGLRIR.

In terms of biological role, component of a type I toxin-antitoxin (TA) system. Either this protein or sequences upstream of it are required for translation of downstream flmA; this could be translationally coupled to flmA. This Escherichia coli (strain K12) protein is Protein FlmC (flmC).